The following is a 95-amino-acid chain: Acyl carrier protein (95 aa).

The 76-residue stretch at 4 to 79 folds into the Carrier domain; that stretch reads KEIFERIEQV…HVMELTLDLV (76 aa). Position 39 is an O-(pantetheine 4'-phosphoryl)serine (Ser39).

Belongs to the acyl carrier protein (ACP) family. 4'-phosphopantetheine is transferred from CoA to a specific serine of apo-ACP by AcpS. This modification is essential for activity because fatty acids are bound in thioester linkage to the sulfhydryl of the prosthetic group.

It is found in the cytoplasm. It functions in the pathway lipid metabolism; fatty acid biosynthesis. Carrier of the growing fatty acid chain in fatty acid biosynthesis. This is Acyl carrier protein from Saccharopolyspora erythraea (strain ATCC 11635 / DSM 40517 / JCM 4748 / NBRC 13426 / NCIMB 8594 / NRRL 2338).